Consider the following 625-residue polypeptide: tRNA uridine 5-carboxymethylaminomethyl modification enzyme MnmG (625 aa).

FAD is bound by residues 9-14 (GGGHAG), Val121, and Ser177. 271 to 285 (GPRYCPSIEDKVNRF) serves as a coordination point for NAD(+). Gln368 serves as a coordination point for FAD.

This sequence belongs to the MnmG family. In terms of assembly, homodimer. Heterotetramer of two MnmE and two MnmG subunits. FAD is required as a cofactor.

Its subcellular location is the cytoplasm. Functionally, NAD-binding protein involved in the addition of a carboxymethylaminomethyl (cmnm) group at the wobble position (U34) of certain tRNAs, forming tRNA-cmnm(5)s(2)U34. This chain is tRNA uridine 5-carboxymethylaminomethyl modification enzyme MnmG, found in Aliarcobacter butzleri (strain RM4018) (Arcobacter butzleri).